We begin with the raw amino-acid sequence, 146 residues long: UPF0735 ACT domain-containing protein Cphy_3604 (146 aa).

The region spanning 70-145 is the ACT domain; it reads TFMLQMDDIP…GIHYLKILGR (76 aa).

This sequence belongs to the UPF0735 family.

This is UPF0735 ACT domain-containing protein Cphy_3604 from Lachnoclostridium phytofermentans (strain ATCC 700394 / DSM 18823 / ISDg) (Clostridium phytofermentans).